Consider the following 279-residue polypeptide: 2-dehydro-3-deoxyphosphooctonate aldolase (279 aa).

Belongs to the KdsA family.

It localises to the cytoplasm. The enzyme catalyses D-arabinose 5-phosphate + phosphoenolpyruvate + H2O = 3-deoxy-alpha-D-manno-2-octulosonate-8-phosphate + phosphate. The protein operates within carbohydrate biosynthesis; 3-deoxy-D-manno-octulosonate biosynthesis; 3-deoxy-D-manno-octulosonate from D-ribulose 5-phosphate: step 2/3. It participates in bacterial outer membrane biogenesis; lipopolysaccharide biosynthesis. The polypeptide is 2-dehydro-3-deoxyphosphooctonate aldolase (Bartonella henselae (strain ATCC 49882 / DSM 28221 / CCUG 30454 / Houston 1) (Rochalimaea henselae)).